We begin with the raw amino-acid sequence, 282 residues long: HTH-type transcriptional activator RhaR (282 aa).

One can recognise an HTH araC/xylS-type domain in the interval 179–277; that stretch reads DKLITRLAAS…GMTPSQWRHL (99 aa). 2 consecutive DNA-binding regions (H-T-H motif) follow at residues 196 to 217 and 244 to 267; these read DKFC…RQQT and ISDI…TRET.

In terms of assembly, binds DNA as a dimer.

The protein localises to the cytoplasm. In terms of biological role, activates expression of the rhaSR operon in response to L-rhamnose. The sequence is that of HTH-type transcriptional activator RhaR from Escherichia coli O139:H28 (strain E24377A / ETEC).